Consider the following 353-residue polypeptide: MDYTMEPNVTMTDYYPDFFTAPCDAEFLLRGSMLYLAILYCVLFVLGLLGNSLVILVLVGCKKLRSITDIYLLNLAASDLLFVLSIPFQTHNLLDQWVFGTAMCKVVSGLYYIGFFSSMFFITLMSVDRYLAIVHAVYAIKVRTASVGTALSLTVWLAAVTATIPLMVFYQVASEDGMLQCFQFYEEQSLRWKLFTHFEINALGLLLPFAILLFCYVRILQQLRGCLNHNRTRAIKLVLTVVIVSLLFWVPFNVALFLTSLHDLHILDGCATRQRLALAIHVTEVISFTHCCVNPVIYAFIGEKFKKHLMDVFQKSCSHIFLYLGRQMPVGALERQLSSNQRSSHSSTLDDIL.

Residues 1-33 (MDYTMEPNVTMTDYYPDFFTAPCDAEFLLRGSM) lie on the Extracellular side of the membrane. Asparagine 8 carries an N-linked (GlcNAc...) asparagine glycan. The helical transmembrane segment at 34-61 (LYLAILYCVLFVLGLLGNSLVILVLVGC) threads the bilayer. Topologically, residues 62–71 (KKLRSITDIY) are cytoplasmic. The chain crosses the membrane as a helical span at residues 72 to 91 (LLNLAASDLLFVLSIPFQTH). The Extracellular portion of the chain corresponds to 92–105 (NLLDQWVFGTAMCK). A disulfide bridge links cysteine 104 with cysteine 181. A helical transmembrane segment spans residues 106–127 (VVSGLYYIGFFSSMFFITLMSV). Residues 128–144 (DRYLAIVHAVYAIKVRT) are Cytoplasmic-facing. The chain crosses the membrane as a helical span at residues 145–169 (ASVGTALSLTVWLAAVTATIPLMVF). At 170–200 (YQVASEDGMLQCFQFYEEQSLRWKLFTHFEI) the chain is on the extracellular side. A helical transmembrane segment spans residues 201 to 220 (NALGLLLPFAILLFCYVRIL). Over 221–236 (QQLRGCLNHNRTRAIK) the chain is Cytoplasmic. Residues 237–261 (LVLTVVIVSLLFWVPFNVALFLTSL) form a helical membrane-spanning segment. The Extracellular segment spans residues 262 to 278 (HDLHILDGCATRQRLAL). The chain crosses the membrane as a helical span at residues 279 to 302 (AIHVTEVISFTHCCVNPVIYAFIG). Over 303–353 (EKFKKHLMDVFQKSCSHIFLYLGRQMPVGALERQLSSNQRSSHSSTLDDIL) the chain is Cytoplasmic.

Belongs to the G-protein coupled receptor 1 family. Expressed in thymus.

Its subcellular location is the cell membrane. Its function is as follows. Receptor for the CCL1/SCY1/TCA-3 chemokine. The chain is C-C chemokine receptor type 8 (Ccr8) from Mus musculus (Mouse).